The chain runs to 658 residues: Carnitine O-palmitoyltransferase 2, mitochondrial (658 aa).

Residues 1–25 (MVPRLLLRAWPRGPAVGPGAPSRPL) constitute a mitochondrion transit peptide. Topologically, residues 26 to 178 (SAGSGPGQYL…GLLEPEVFHL (153 aa)) are mitochondrial matrix. N6-succinyllysine is present on lysine 69. Position 79 is an N6-acetyllysine (lysine 79). Lysine 85 is subject to N6-succinyllysine. The note=Mitochondrial inner membrane intramembrane region spans 179–208 (NPAKSDTDTFKRLIRFVPSSLSWYGAYLVN). Residues 209–658 (AYPLDMSQYF…DALEGKSIKS (450 aa)) lie on the Mitochondrial matrix side of the membrane. N6-acetyllysine; alternate is present on lysine 239. The residue at position 239 (lysine 239) is an N6-succinyllysine; alternate. Lysine 305 bears the N6-acetyllysine mark. Histidine 372 functions as the Proton acceptor in the catalytic mechanism. N6-acetyllysine; alternate is present on lysine 418. At lysine 418 the chain carries N6-succinyllysine; alternate. Lysine 424 and lysine 439 each carry N6-succinyllysine. Position 452 to 464 (452 to 464 (GKEFLKKQKLSPD)) interacts with CoA. Positions 486, 488, and 499 each coordinate (R)-carnitine. N6-acetyllysine; alternate occurs at positions 510 and 544. Residues lysine 510 and lysine 544 each carry the N6-succinyllysine; alternate modification.

The protein belongs to the carnitine/choline acetyltransferase family.

It is found in the mitochondrion inner membrane. The catalysed reaction is (R)-carnitine + hexadecanoyl-CoA = O-hexadecanoyl-(R)-carnitine + CoA. It carries out the reaction octanoyl-CoA + (R)-carnitine = O-octanoyl-(R)-carnitine + CoA. The enzyme catalyses decanoyl-CoA + (R)-carnitine = O-decanoyl-(R)-carnitine + CoA. It catalyses the reaction dodecanoyl-CoA + (R)-carnitine = O-dodecanoyl-R-carnitine + CoA. The catalysed reaction is tetradecanoyl-CoA + (R)-carnitine = O-tetradecanoyl-(R)-carnitine + CoA. It carries out the reaction (R)-carnitine + octadecanoyl-CoA = O-octadecanoyl-(R)-carnitine + CoA. The enzyme catalyses eicosanoyl-CoA + (R)-carnitine = O-eicosanoyl-(R)-carnitine + CoA. It catalyses the reaction (9Z)-tetradecenoyl-CoA + (R)-carnitine = O-(9Z)-tetradecenoyl-(R)-carnitine + CoA. The catalysed reaction is (5Z)-tetradecenoyl-CoA + (R)-carnitine = O-(5Z)-tetradecenoyl-(R)-carnitine + CoA. It carries out the reaction (R)-carnitine + (9Z)-octadecenoyl-CoA = O-(9Z)-octadecenoyl-(R)-carnitine + CoA. The enzyme catalyses 4,8-dimethylnonanoyl-CoA + (R)-carnitine = O-4,8-dimethylnonanoyl-(R)-carnitine + CoA. It participates in lipid metabolism; fatty acid beta-oxidation. In terms of biological role, involved in the intramitochondrial synthesis of acylcarnitines from accumulated acyl-CoA metabolites. Reconverts acylcarnitines back into the respective acyl-CoA esters that can then undergo beta-oxidation, an essential step for the mitochondrial uptake of long-chain fatty acids and their subsequent beta-oxidation in the mitochondrion. Active with medium (C8-C12) and long-chain (C14-C18) acyl-CoA esters. This chain is Carnitine O-palmitoyltransferase 2, mitochondrial (CPT2), found in Macaca fascicularis (Crab-eating macaque).